The sequence spans 403 residues: Tripartite motif-containing protein 59 (403 aa).

The RING-type zinc-finger motif lies at 10-60 (CPICYSIFEDPRVLPCSHTFCRNCLENVLQASGNFYIWRPLRIPLKCPNCR). The B box-type zinc-finger motif lies at 92–134 (PDVVTCPEHYRQPLNVYCLLDKKLVCGHCLTIGQHHGHPIDDL). Positions 97, 100, 120, and 126 each coordinate Zn(2+). Residues 163–246 (LIEKLEEQKC…TITTSLQDES (84 aa)) are a coiled coil. The helical transmembrane segment at 329-349 (ILNIAIVSLISVILMLILLFN) threads the bilayer.

It belongs to the TRIM/RBCC family. Interacts with ECSIT. Moderately expressed in the spleen, brain and heart and very highly expressed in the testis.

Its subcellular location is the endoplasmic reticulum membrane. The enzyme catalyses S-ubiquitinyl-[E2 ubiquitin-conjugating enzyme]-L-cysteine + [acceptor protein]-L-lysine = [E2 ubiquitin-conjugating enzyme]-L-cysteine + N(6)-ubiquitinyl-[acceptor protein]-L-lysine.. It participates in protein modification; protein ubiquitination. Its function is as follows. E3 ubiquitin ligase involved in different processes such as development and immune response. Serves as a negative regulator for innate immune signaling pathways by suppressing RLR-induced activation of IRF3/7 and NF-kappa-B via interaction with adapter ECSIT. Regulates autophagy through modulating both the transcription and the ubiquitination of BECN1. On the one hand, regulates the transcription of BECN1 through negatively modulating the NF-kappa-B pathway. On the other hand, regulates TRAF6-mediated 'Lys-63'-linked ubiquitination of BECN1, thus affecting the formation of the BECN1-PIK3C3 complex. In addition, mediates 'Lys-48'-linked ubiquitination of TRAF6 and thereby promotes TRAF6 proteasomal degradation. Also acts as a critical regulator for early embryo development from blastocyst stage to gastrula through modulating F-actin assembly and WASH1 'Lys-63'-linked ubiquitination. The sequence is that of Tripartite motif-containing protein 59 (Trim59) from Mus musculus (Mouse).